The following is a 199-amino-acid chain: 3-hexulose-6-phosphate isomerase (199 aa).

Residues 44–186 (LARQIVQPGR…FQSLWDHTEV (143 aa)) enclose the SIS domain. Substrate-binding positions include Ser62 and 101–106 (SGSGTT). Residue Glu166 is the Proton acceptor of the active site.

It belongs to the SIS family. PHI subfamily.

The enzyme catalyses D-arabino-hex-3-ulose 6-phosphate = beta-D-fructose 6-phosphate. The protein operates within one-carbon metabolism; formaldehyde assimilation via RuMP pathway; D-fructose 6-phosphate from D-ribulose 5-phosphate and formaldehyde: step 2/2. In terms of biological role, catalyzes the isomerization between 3-hexulose 6-phosphate and fructose 6-phosphate. The protein is 3-hexulose-6-phosphate isomerase (rmpB) of Mycobacterium gastri.